A 383-amino-acid chain; its full sequence is Arginine biosynthesis bifunctional protein ArgJ (383 aa).

6 residues coordinate substrate: Thr-146, Lys-168, Thr-179, Glu-259, Asn-378, and Ser-383. Thr-179 acts as the Nucleophile in catalysis.

It belongs to the ArgJ family. Heterotetramer of two alpha and two beta chains.

It is found in the cytoplasm. It catalyses the reaction N(2)-acetyl-L-ornithine + L-glutamate = N-acetyl-L-glutamate + L-ornithine. It carries out the reaction L-glutamate + acetyl-CoA = N-acetyl-L-glutamate + CoA + H(+). The protein operates within amino-acid biosynthesis; L-arginine biosynthesis; L-ornithine and N-acetyl-L-glutamate from L-glutamate and N(2)-acetyl-L-ornithine (cyclic): step 1/1. Its pathway is amino-acid biosynthesis; L-arginine biosynthesis; N(2)-acetyl-L-ornithine from L-glutamate: step 1/4. Catalyzes two activities which are involved in the cyclic version of arginine biosynthesis: the synthesis of N-acetylglutamate from glutamate and acetyl-CoA as the acetyl donor, and of ornithine by transacetylation between N(2)-acetylornithine and glutamate. The polypeptide is Arginine biosynthesis bifunctional protein ArgJ (Streptomyces avermitilis (strain ATCC 31267 / DSM 46492 / JCM 5070 / NBRC 14893 / NCIMB 12804 / NRRL 8165 / MA-4680)).